The chain runs to 48 residues: Hemoglobin subunit beta-B (48 aa).

The 47-residue stretch at 2–48 folds into the Globin domain; the sequence is EWTDAERGAILSLWGKIDPDELGPALLARXXLVYXXTQRYFASFGDL.

It belongs to the globin family. In terms of assembly, heterotetramer of two alpha chains and two beta chains. In terms of tissue distribution, red blood cells.

Its function is as follows. Involved in oxygen transport from gills to the various peripheral tissues. The polypeptide is Hemoglobin subunit beta-B (Catostomus clarkii (Desert sucker)).